Consider the following 299-residue polypeptide: MTFKSGFVAILGRPNVGKSTFLNHVMGQKIAIMSDKAQTTRNKIMGIYTTETEQIVFIDTPGIHKPKTALGDFMVESAYSTLREVETVLFMVPADEKRGKGDDMIIERLKAAKIPVILVINKIDKVHPDQLLEQIDDFRSQMDFKEVVPISALQGNNVPTLIKLLTDNLEEGFQYFPEDQITDHPERFLVSEMVREKVLHLTQQEVPHSVAVVVESMKRDEETDKVHIRATIMVERDSQKGIIIGKQGAMLKKIGKMARRDIELMLGDKVYLETWVKVKKNWRDKKLDLADFGYNEKEY.

One can recognise an Era-type G domain in the interval Lys-4–Glu-171. The interval Gly-12–Ser-19 is G1. Gly-12–Ser-19 serves as a coordination point for GTP. Residues Gln-38–Asn-42 form a G2 region. A G3 region spans residues Asp-59–Gly-62. Residues Asp-59–Ile-63 and Asn-121–Asp-124 each bind GTP. The interval Asn-121–Asp-124 is G4. Residues Ile-150 to Ala-152 are G5. Positions Thr-202 to Lys-280 constitute a KH type-2 domain.

It belongs to the TRAFAC class TrmE-Era-EngA-EngB-Septin-like GTPase superfamily. Era GTPase family. In terms of assembly, monomer.

The protein localises to the cytoplasm. It localises to the cell membrane. An essential GTPase that binds both GDP and GTP, with rapid nucleotide exchange. Plays a role in 16S rRNA processing and 30S ribosomal subunit biogenesis and possibly also in cell cycle regulation and energy metabolism. The polypeptide is GTPase Era (Streptococcus agalactiae serotype III (strain NEM316)).